We begin with the raw amino-acid sequence, 204 residues long: Large ribosomal subunit protein eL15y (204 aa).

The segment at Arg162–Arg204 is disordered. Residues Asn171 to Trp192 are compositionally biased toward basic residues. Polar residues predominate over residues Lys193 to Arg204.

This sequence belongs to the eukaryotic ribosomal protein eL15 family.

In Arabidopsis thaliana (Mouse-ear cress), this protein is Large ribosomal subunit protein eL15y (RPL15B).